Consider the following 806-residue polypeptide: DEP domain-containing protein 1A (806 aa).

A DEP domain is found at 24–108 (FRAAMPLRKH…DNNSLYRFPS (85 aa)). The tract at residues 142–177 (QFSKKTPKRRASVDSKEEQENEDLMEDQRNDDDFPK) is disordered. Over residues 167 to 177 (EDQRNDDDFPK) the composition is skewed to basic and acidic residues. The 41-residue stretch at 279-319 (DYFLNLPEPLLTFEFYELFVNILVVCGYITVPNSHNGKHRF) folds into the Rho-GAP domain. The disordered stretch occupies residues 564–588 (SHSSFPSTSSLLPPTTSPNSTGSES).

This Xenopus laevis (African clawed frog) protein is DEP domain-containing protein 1A (depdc1a).